The chain runs to 303 residues: Ribosomal RNA small subunit methyltransferase A (303 aa).

Residues 1 to 19 show a composition bias toward low complexity; it reads MSSRPPASFSATFSAARSS. Positions 1–34 are disordered; the sequence is MSSRPPASFSATFSAARSSKCVPPPRRPSTDVSL. Residues H55, L57, G82, E104, D130, and N149 each coordinate S-adenosyl-L-methionine.

This sequence belongs to the class I-like SAM-binding methyltransferase superfamily. rRNA adenine N(6)-methyltransferase family. RsmA subfamily.

The protein localises to the cytoplasm. It catalyses the reaction adenosine(1518)/adenosine(1519) in 16S rRNA + 4 S-adenosyl-L-methionine = N(6)-dimethyladenosine(1518)/N(6)-dimethyladenosine(1519) in 16S rRNA + 4 S-adenosyl-L-homocysteine + 4 H(+). Functionally, specifically dimethylates two adjacent adenosines (A1518 and A1519) in the loop of a conserved hairpin near the 3'-end of 16S rRNA in the 30S particle. May play a critical role in biogenesis of 30S subunits. This chain is Ribosomal RNA small subunit methyltransferase A, found in Gluconobacter oxydans (strain 621H) (Gluconobacter suboxydans).